A 190-amino-acid chain; its full sequence is Ion-translocating oxidoreductase complex subunit B (190 aa).

Residues 1–26 (MLTFWLAVATLSALALVAGAVLGFAA) are hydrophobic. The region spanning 32–90 (KTDPVAERIDALLPQSQCAQCGYPGCRPYAEAVAGGAPINKCVPGGEAVMLKIAAQLSV) is the 4Fe-4S domain. Residues Cys-49, Cys-52, Cys-57, Cys-73, Cys-115, Cys-118, Cys-121, Cys-125, Cys-145, Cys-148, Cys-151, and Cys-155 each coordinate [4Fe-4S] cluster. 2 consecutive 4Fe-4S ferredoxin-type domains span residues 106 to 135 (RVAWIDEGNCIGCTKCIQACPVDAIVGATR) and 136 to 165 (AVHTVVSDLCTGCDLCVAPCPTNCIEMRPL).

It belongs to the 4Fe4S bacterial-type ferredoxin family. RnfB subfamily. The complex is composed of six subunits: RnfA, RnfB, RnfC, RnfD, RnfE and RnfG. [4Fe-4S] cluster is required as a cofactor.

Its subcellular location is the cell inner membrane. Functionally, part of a membrane-bound complex that couples electron transfer with translocation of ions across the membrane. The sequence is that of Ion-translocating oxidoreductase complex subunit B from Sodalis glossinidius (strain morsitans).